Here is a 383-residue protein sequence, read N- to C-terminus: tRNA-specific 2-thiouridylase MnmA (383 aa).

ATP is bound by residues 9-16 and M35; that span reads GMSGGVDS. Residues 95 to 97 are interaction with target base in tRNA; the sequence is NPD. C100 functions as the Nucleophile in the catalytic mechanism. Residues C100 and C196 are joined by a disulfide bond. G124 contacts ATP. Residues 146 to 148 form an interaction with tRNA region; the sequence is KDQ. Residue C196 is the Cysteine persulfide intermediate of the active site. The tract at residues 308-309 is interaction with tRNA; it reads RY.

The protein belongs to the MnmA/TRMU family.

The protein localises to the cytoplasm. It carries out the reaction S-sulfanyl-L-cysteinyl-[protein] + uridine(34) in tRNA + AH2 + ATP = 2-thiouridine(34) in tRNA + L-cysteinyl-[protein] + A + AMP + diphosphate + H(+). Catalyzes the 2-thiolation of uridine at the wobble position (U34) of tRNA, leading to the formation of s(2)U34. The protein is tRNA-specific 2-thiouridylase MnmA of Burkholderia mallei (strain NCTC 10247).